Here is a 476-residue protein sequence, read N- to C-terminus: Ribulose bisphosphate carboxylase large chain (476 aa).

Substrate is bound by residues Asn-124 and Thr-174. Lys-176 (proton acceptor) is an active-site residue. Lys-178 provides a ligand contact to substrate. Lys-202, Asp-204, and Glu-205 together coordinate Mg(2+). Lys-202 carries the N6-carboxylysine modification. The active-site Proton acceptor is His-295. Residues Arg-296, His-328, and Ser-380 each contribute to the substrate site.

Belongs to the RuBisCO large chain family. Type I subfamily. In terms of assembly, heterohexadecamer of 8 large chains and 8 small chains; disulfide-linked. The disulfide link is formed within the large subunit homodimers. Forms complexes of many stoichiometries with Raf1 with and without RbcS. RuBisCO interacts with the C-terminus of CcmM. Mg(2+) is required as a cofactor. The disulfide bond which can form in the large chain dimeric partners within the hexadecamer appears to be associated with oxidative stress and protein turnover.

It is found in the carboxysome. It carries out the reaction 2 (2R)-3-phosphoglycerate + 2 H(+) = D-ribulose 1,5-bisphosphate + CO2 + H2O. It catalyses the reaction D-ribulose 1,5-bisphosphate + O2 = 2-phosphoglycolate + (2R)-3-phosphoglycerate + 2 H(+). Its function is as follows. RuBisCO catalyzes two reactions: the carboxylation of D-ribulose 1,5-bisphosphate, the primary event in carbon dioxide fixation, as well as the oxidative fragmentation of the pentose substrate in the photorespiration process. Both reactions occur simultaneously and in competition at the same active site. In Nostoc sp. (strain PCC 7120 / SAG 25.82 / UTEX 2576), this protein is Ribulose bisphosphate carboxylase large chain.